Reading from the N-terminus, the 175-residue chain is Large ribosomal subunit protein uL10 (175 aa).

It belongs to the universal ribosomal protein uL10 family. Part of the ribosomal stalk of the 50S ribosomal subunit. The N-terminus interacts with L11 and the large rRNA to form the base of the stalk. The C-terminus forms an elongated spine to which L12 dimers bind in a sequential fashion forming a multimeric L10(L12)X complex.

Its function is as follows. Forms part of the ribosomal stalk, playing a central role in the interaction of the ribosome with GTP-bound translation factors. This chain is Large ribosomal subunit protein uL10, found in Synechococcus sp. (strain CC9605).